We begin with the raw amino-acid sequence, 257 residues long: Zinc import ATP-binding protein ZnuC (257 aa).

An ABC transporter domain is found at 6–221 (VRLEQITVAF…AFVETFGHQV (216 aa)). An ATP-binding site is contributed by 38 to 45 (GPNGAGKT).

The protein belongs to the ABC transporter superfamily. Zinc importer (TC 3.A.1.15.5) family. The complex is composed of two ATP-binding proteins (ZnuC), two transmembrane proteins (ZnuB) and a solute-binding protein (ZnuA).

Its subcellular location is the cell inner membrane. The enzyme catalyses Zn(2+)(out) + ATP(in) + H2O(in) = Zn(2+)(in) + ADP(in) + phosphate(in) + H(+)(in). Part of the ABC transporter complex ZnuABC involved in zinc import. Responsible for energy coupling to the transport system. This chain is Zinc import ATP-binding protein ZnuC, found in Marinobacter nauticus (strain ATCC 700491 / DSM 11845 / VT8) (Marinobacter aquaeolei).